A 153-amino-acid polypeptide reads, in one-letter code: Ribonuclease H (153 aa).

An RNase H type-1 domain is found at 1–141; sequence MKHIEIYTDG…CDVLARDAAS (141 aa). Mg(2+) is bound by residues Asp-9, Glu-47, Asp-69, and Asp-133.

Belongs to the RNase H family. As to quaternary structure, monomer. The cofactor is Mg(2+).

Its subcellular location is the cytoplasm. It carries out the reaction Endonucleolytic cleavage to 5'-phosphomonoester.. Functionally, endonuclease that specifically degrades the RNA of RNA-DNA hybrids. This Pseudoalteromonas atlantica (strain T6c / ATCC BAA-1087) protein is Ribonuclease H.